Consider the following 310-residue polypeptide: NAD-dependent protein deacylase sirtuin-5, mitochondrial (310 aa).

Residues 1-36 (MQPLQIAPCRLLYGLYRGLKSPASTGTRICPAMARP) constitute a mitochondrion transit peptide. In terms of domain architecture, Deacetylase sirtuin-type spans 37 to 307 (SSNMADFRKL…PEALAPHETG (271 aa)). 58–77 (GAGVSAESGVPTFRGAGGYW) provides a ligand contact to NAD(+). 2 residues coordinate substrate: Tyr-102 and Arg-105. 140–143 (QNID) contributes to the NAD(+) binding site. The active-site Proton acceptor is His-158. Residues Cys-166, Cys-169, Cys-207, and Cys-212 each contribute to the Zn(2+) site. NAD(+) contacts are provided by residues 249–251 (GTS), 275–277 (NME), and Cys-293.

It belongs to the sirtuin family. Class III subfamily. As to quaternary structure, monomer. Homodimer. Interacts with CPS1. Interacts with PCCA. It depends on Zn(2+) as a cofactor.

Its subcellular location is the mitochondrion. The protein localises to the cytoplasm. It is found in the cytosol. The protein resides in the nucleus. The enzyme catalyses N(6)-malonyl-L-lysyl-[protein] + NAD(+) + H2O = 2''-O-malonyl-ADP-D-ribose + nicotinamide + L-lysyl-[protein]. It carries out the reaction N(6)-succinyl-L-lysyl-[protein] + NAD(+) + H2O = 2''-O-succinyl-ADP-D-ribose + nicotinamide + L-lysyl-[protein]. The catalysed reaction is N(6)-glutaryl-L-lysyl-[protein] + NAD(+) + H2O = 2''-O-glutaryl-ADP-D-ribose + nicotinamide + L-lysyl-[protein]. In terms of biological role, NAD-dependent lysine demalonylase, desuccinylase and deglutarylase that specifically removes malonyl, succinyl and glutaryl groups on target proteins. Activates CPS1 and contributes to the regulation of blood ammonia levels during prolonged fasting: acts by mediating desuccinylation and deglutarylation of CPS1, thereby increasing CPS1 activity in response to elevated NAD levels during fasting. Activates SOD1 by mediating its desuccinylation, leading to reduced reactive oxygen species. Activates SHMT2 by mediating its desuccinylation. Modulates ketogenesis through the desuccinylation and activation of HMGCS2. Has weak NAD-dependent protein deacetylase activity; however this activity may not be physiologically relevant in vivo. Can deacetylate cytochrome c (CYCS) and a number of other proteins in vitro such as UOX. This Canis lupus familiaris (Dog) protein is NAD-dependent protein deacylase sirtuin-5, mitochondrial.